Here is a 75-residue protein sequence, read N- to C-terminus: ATP synthase subunit c (75 aa).

Helical transmembrane passes span 8–28 (FLGIGLSVVGMLGAAIGVSNI) and 54–74 (AALTEAMGLFSFVLALLLIFV).

It belongs to the ATPase C chain family. As to quaternary structure, F-type ATPases have 2 components, F(1) - the catalytic core - and F(0) - the membrane proton channel. F(1) has five subunits: alpha(3), beta(3), gamma(1), delta(1), epsilon(1). F(0) has three main subunits: a(1), b(2) and c(10-14). The alpha and beta chains form an alternating ring which encloses part of the gamma chain. F(1) is attached to F(0) by a central stalk formed by the gamma and epsilon chains, while a peripheral stalk is formed by the delta and b chains.

The protein resides in the cell inner membrane. In terms of biological role, f(1)F(0) ATP synthase produces ATP from ADP in the presence of a proton or sodium gradient. F-type ATPases consist of two structural domains, F(1) containing the extramembraneous catalytic core and F(0) containing the membrane proton channel, linked together by a central stalk and a peripheral stalk. During catalysis, ATP synthesis in the catalytic domain of F(1) is coupled via a rotary mechanism of the central stalk subunits to proton translocation. Key component of the F(0) channel; it plays a direct role in translocation across the membrane. A homomeric c-ring of between 10-14 subunits forms the central stalk rotor element with the F(1) delta and epsilon subunits. In Neorickettsia sennetsu (strain ATCC VR-367 / Miyayama) (Ehrlichia sennetsu), this protein is ATP synthase subunit c.